A 223-amino-acid chain; its full sequence is Prolactin-3D4 (223 aa).

The N-terminal stretch at Met-1–Ala-28 is a signal peptide. 2 cysteine pairs are disulfide-bonded: Cys-80–Cys-198 and Cys-215–Cys-223. Residues Asn-108 and Asn-157 are each glycosylated (N-linked (GlcNAc...) asparagine).

It belongs to the somatotropin/prolactin family. Post-translationally, N-glycosylated.

Its subcellular location is the secreted. The sequence is that of Prolactin-3D4 (Prl3d4) from Rattus norvegicus (Rat).